We begin with the raw amino-acid sequence, 381 residues long: Tumor necrosis factor receptor superfamily member 10B (381 aa).

Residues 1 to 52 (MEPPGPSTPTASAAARADHYTPGLRPLPKRRLLYSFALLLAVLQAVFVPVTA) form the signal peptide. 3 TNFR-Cys repeats span residues 26-86 (PLPK…GNCK), 87-129 (PCRE…NTVC), and 130-169 (RCKP…NRKC). Residues 53 to 180 (NPAHNRPAGL…SKTAWASWHK (128 aa)) lie on the Extracellular side of the membrane. Disulfide bonds link Cys-74/Cys-85, Cys-88/Cys-105, Cys-108/Cys-121, Cys-111/Cys-129, Cys-131/Cys-145, Cys-148/Cys-161, and Cys-151/Cys-169. Residues 181–201 (LGLWIGLLVPVVLLIGALLVW) traverse the membrane as a helical segment. Residues 202–381 (KTGAWRQWLL…ETGPGGSQCV (180 aa)) lie on the Cytoplasmic side of the membrane. Positions 228-260 (HSSLLDRQTSSTTNDSNHNTEPGKTQKTGKKLL) are disordered. The span at 236 to 247 (TSSTTNDSNHNT) shows a compositional bias: low complexity. The 84-residue stretch at 273-356 (KFIFEYCSDI…DAMEKIEDYA (84 aa)) folds into the Death domain. A glycan ((Microbial infection) N-beta-linked (GlcNAc) arginine) is linked at Arg-293.

Monomer. Can interact with TRADD and RIPK1. Three TNFRSF10B molecules interact with the TNFSF10 homotrimer. In the absence of stimulation, interacts with BIRC2, DDX3X and GSK3B. The interaction with BIRC2 and DDX3X is further enhanced upon receptor stimulation and accompanied by DDX3X and BIRC2 cleavage. (Microbial infection) Glycosylated at Arg-293 by S.typhimurium protein Ssek3. Highly expressed in heart, lung and kidney.

The protein resides in the membrane. Receptor for the cytotoxic ligand TNFSF10/TRAIL. The adapter molecule FADD recruits caspase-8 to the activated receptor. The resulting death-inducing signaling complex (DISC) performs caspase-8 proteolytic activation which initiates the subsequent cascade of caspases (aspartate-specific cysteine proteases) mediating apoptosis. Promotes the activation of NF-kappa-B. Essential for ER stress-induced apoptosis. In Mus musculus (Mouse), this protein is Tumor necrosis factor receptor superfamily member 10B (Tnfrsf10b).